A 237-amino-acid chain; its full sequence is Ribosomal RNA small subunit methyltransferase G (237 aa).

S-adenosyl-L-methionine contacts are provided by residues Gly72, Leu77, 123–124 (AE), and Arg138. Residues 210 to 237 (TALETGTKAAPSRSPRKPGGRKKRGRKR) form a disordered region. Residues 223-237 (SPRKPGGRKKRGRKR) show a composition bias toward basic residues.

Belongs to the methyltransferase superfamily. RNA methyltransferase RsmG family.

It is found in the cytoplasm. Functionally, specifically methylates the N7 position of guanine in position 518 of 16S rRNA. The polypeptide is Ribosomal RNA small subunit methyltransferase G (Thermobifida fusca (strain YX)).